We begin with the raw amino-acid sequence, 171 residues long: N5-carboxyaminoimidazole ribonucleotide mutase (171 aa).

Residues Ser13, Asp16, and Arg43 each contribute to the substrate site.

It belongs to the AIR carboxylase family. Class I subfamily.

The enzyme catalyses 5-carboxyamino-1-(5-phospho-D-ribosyl)imidazole + H(+) = 5-amino-1-(5-phospho-D-ribosyl)imidazole-4-carboxylate. Its pathway is purine metabolism; IMP biosynthesis via de novo pathway; 5-amino-1-(5-phospho-D-ribosyl)imidazole-4-carboxylate from 5-amino-1-(5-phospho-D-ribosyl)imidazole (N5-CAIR route): step 2/2. In terms of biological role, catalyzes the conversion of N5-carboxyaminoimidazole ribonucleotide (N5-CAIR) to 4-carboxy-5-aminoimidazole ribonucleotide (CAIR). The chain is N5-carboxyaminoimidazole ribonucleotide mutase from Mycobacterium leprae (strain TN).